Consider the following 480-residue polypeptide: Probable glycine dehydrogenase (decarboxylating) subunit 2 (480 aa).

N6-(pyridoxal phosphate)lysine is present on Lys265.

The protein belongs to the GcvP family. C-terminal subunit subfamily. As to quaternary structure, the glycine cleavage system is composed of four proteins: P, T, L and H. In this organism, the P 'protein' is a heterodimer of two subunits. It depends on pyridoxal 5'-phosphate as a cofactor.

The enzyme catalyses N(6)-[(R)-lipoyl]-L-lysyl-[glycine-cleavage complex H protein] + glycine + H(+) = N(6)-[(R)-S(8)-aminomethyldihydrolipoyl]-L-lysyl-[glycine-cleavage complex H protein] + CO2. In terms of biological role, the glycine cleavage system catalyzes the degradation of glycine. The P protein binds the alpha-amino group of glycine through its pyridoxal phosphate cofactor; CO(2) is released and the remaining methylamine moiety is then transferred to the lipoamide cofactor of the H protein. This chain is Probable glycine dehydrogenase (decarboxylating) subunit 2, found in Thermosipho africanus (strain TCF52B).